The chain runs to 838 residues: Ribonucleoside-diphosphate reductase large subunit (838 aa).

Residues K6–E97 enclose the ATP-cone domain. Residues K10–R11, E16–V22, T58, and D62 contribute to the ATP site. A GDP-binding site is contributed by S227. C228 and C454 are oxidised to a cystine. DTTP is bound by residues D236 to I238, K253, R266, and A273 to G274. N437 contributes to the GDP binding site. N437 functions as the Proton acceptor in the catalytic mechanism. The Cysteine radical intermediate role is filled by C439. GDP contacts are provided by residues E441 and T626–T629. Residue E441 is the Proton acceptor of the active site. Over residues K780–H794 the composition is skewed to basic and acidic residues. The interval K780–S838 is disordered.

Belongs to the ribonucleoside diphosphate reductase large chain family. As to quaternary structure, heterodimer of a large and a small subunit.

It carries out the reaction a 2'-deoxyribonucleoside 5'-diphosphate + [thioredoxin]-disulfide + H2O = a ribonucleoside 5'-diphosphate + [thioredoxin]-dithiol. It catalyses the reaction dCDP + [thioredoxin]-disulfide + H2O = CDP + [thioredoxin]-dithiol. Under complex allosteric control mediated by deoxynucleoside triphosphates and ATP binding to separate specificity and activation sites on the large subunit. The type of nucleotide bound at the specificity site determines substrate preference. It seems probable that ATP makes the enzyme reduce CDP and UDP, dGTP favors ADP reduction and dTTP favors GDP reduction. Stimulated by ATP and inhibited by dATP binding to the activity site. Its function is as follows. Provides the precursors necessary for DNA synthesis. Catalyzes the rate limiting step in the de novo synthesis of deoxyribonucleotides by directly reducing ribonucleotides to the corresponding deoxyribonucleotides. This is Ribonucleoside-diphosphate reductase large subunit (RNR1) from Trypanosoma brucei brucei.